A 377-amino-acid chain; its full sequence is RIB43A-like with coiled-coils protein 2 (377 aa).

A coiled-coil region spans residues 217-246 (NKNQVVELTERKRQEKQQEQEDNMTEITNL). Positions 354–377 (KQMNTASSSQPTEDYFSQFNTRSR) are disordered.

The protein belongs to the RIB43A family. As to quaternary structure, microtubule inner protein component of sperm flagellar doublet microtubules.

The protein resides in the cytoplasm. Its subcellular location is the cytoskeleton. The protein localises to the cilium axoneme. It is found in the flagellum axoneme. Its function is as follows. Microtubule inner protein (MIP) part of the dynein-decorated doublet microtubules (DMTs) in cilia axoneme, which is required for motile cilia beating. This Mus musculus (Mouse) protein is RIB43A-like with coiled-coils protein 2.